Here is a 454-residue protein sequence, read N- to C-terminus: Chromosomal replication initiator protein DnaA (454 aa).

Positions Met-1 to Ala-83 are domain I, interacts with DnaA modulators. A domain II region spans residues Ala-83–Arg-115. The tract at residues Leu-116–Asn-333 is domain III, AAA+ region. 4 residues coordinate ATP: Gly-160, Gly-162, Lys-163, and Ser-164. The tract at residues Ser-334–Phe-454 is domain IV, binds dsDNA.

It belongs to the DnaA family. As to quaternary structure, oligomerizes as a right-handed, spiral filament on DNA at oriC.

The protein resides in the cytoplasm. Functionally, plays an essential role in the initiation and regulation of chromosomal replication. ATP-DnaA binds to the origin of replication (oriC) to initiate formation of the DNA replication initiation complex once per cell cycle. Binds the DnaA box (a 9 base pair repeat at the origin) and separates the double-stranded (ds)DNA. Forms a right-handed helical filament on oriC DNA; dsDNA binds to the exterior of the filament while single-stranded (ss)DNA is stabiized in the filament's interior. The ATP-DnaA-oriC complex binds and stabilizes one strand of the AT-rich DNA unwinding element (DUE), permitting loading of DNA polymerase. After initiation quickly degrades to an ADP-DnaA complex that is not apt for DNA replication. Binds acidic phospholipids. This Desulfatibacillum aliphaticivorans protein is Chromosomal replication initiator protein DnaA.